An 81-amino-acid chain; its full sequence is Conotoxin Cl9.6 (81 aa).

The signal sequence occupies residues 1–20 (MSTLGMTLLILLLLLPLATP). Residues 21-40 (DDVGQPPKRDTLRNLLKIGT) constitute a propeptide that is removed on maturation. 3 disulfide bridges follow: Cys46-Cys69, Cys54-Cys76, and Cys60-Cys78.

Expressed by the venom duct.

It localises to the secreted. This Californiconus californicus (California cone) protein is Conotoxin Cl9.6.